Here is a 367-residue protein sequence, read N- to C-terminus: 3-dehydroquinate synthase (367 aa).

NAD(+)-binding positions include 69–74 (DGEAFK), 103–107 (GVVGD), 127–128 (TT), lysine 140, lysine 149, and 167–170 (TLAT). Zn(2+) contacts are provided by glutamate 182, histidine 245, and histidine 262.

The protein belongs to the sugar phosphate cyclases superfamily. Dehydroquinate synthase family. Co(2+) serves as cofactor. Zn(2+) is required as a cofactor. The cofactor is NAD(+).

The protein resides in the cytoplasm. It carries out the reaction 7-phospho-2-dehydro-3-deoxy-D-arabino-heptonate = 3-dehydroquinate + phosphate. It functions in the pathway metabolic intermediate biosynthesis; chorismate biosynthesis; chorismate from D-erythrose 4-phosphate and phosphoenolpyruvate: step 2/7. Catalyzes the conversion of 3-deoxy-D-arabino-heptulosonate 7-phosphate (DAHP) to dehydroquinate (DHQ). This chain is 3-dehydroquinate synthase, found in Azotobacter vinelandii (strain DJ / ATCC BAA-1303).